The sequence spans 249 residues: Small ribosomal subunit protein uS3 (249 aa).

Positions 39 to 107 (VRAMLKKRLY…EVHLNIVEIR (69 aa)) constitute a KH type-2 domain. The segment at 215 to 249 (LDKRLATESGPAGEGGGRERGDRPDRGDRGRRDRG) is disordered. Basic and acidic residues predominate over residues 230–249 (GGRERGDRPDRGDRGRRDRG).

The protein belongs to the universal ribosomal protein uS3 family. Part of the 30S ribosomal subunit. Forms a tight complex with proteins S10 and S14.

Its function is as follows. Binds the lower part of the 30S subunit head. Binds mRNA in the 70S ribosome, positioning it for translation. This chain is Small ribosomal subunit protein uS3, found in Caulobacter sp. (strain K31).